The sequence spans 202 residues: Glycerol-3-phosphate acyltransferase (202 aa).

The next 6 helical transmembrane spans lie at 3–23 (NLII…LILT), 61–81 (IATI…LKFL), 87–107 (LLWS…YLLF), 117–137 (AGAM…VWAV), 144–164 (ISSL…FIFN), and 167–187 (LEIH…YKHL).

The protein belongs to the PlsY family. In terms of assembly, probably interacts with PlsX.

It localises to the cell inner membrane. It carries out the reaction an acyl phosphate + sn-glycerol 3-phosphate = a 1-acyl-sn-glycero-3-phosphate + phosphate. Its pathway is lipid metabolism; phospholipid metabolism. Catalyzes the transfer of an acyl group from acyl-phosphate (acyl-PO(4)) to glycerol-3-phosphate (G3P) to form lysophosphatidic acid (LPA). This enzyme utilizes acyl-phosphate as fatty acyl donor, but not acyl-CoA or acyl-ACP. The protein is Glycerol-3-phosphate acyltransferase of Campylobacter jejuni subsp. doylei (strain ATCC BAA-1458 / RM4099 / 269.97).